The sequence spans 335 residues: 3-hydroxy-3-methylglutaryl-CoA lyase, cytoplasmic (335 aa).

Gly2 carries N-myristoyl glycine lipidation. The Pyruvate carboxyltransferase domain maps to 43–310; sequence VKIVEVGPRD…ETGVDLLKVM (268 aa). Arg51 contacts substrate. Asp52 contributes to the a divalent metal cation binding site. Lys58 carries the post-translational modification N6-acetyllysine. Residues His243 and His245 each coordinate a divalent metal cation. Cys276 is a catalytic residue. Asn285 contributes to the a divalent metal cation binding site.

It belongs to the HMG-CoA lyase family. The cofactor is a divalent metal cation.

It is found in the cytoplasm. The protein resides in the cytosol. The protein localises to the endoplasmic reticulum membrane. The enzyme catalyses (3S)-3-hydroxy-3-methylglutaryl-CoA = acetoacetate + acetyl-CoA. Its pathway is metabolic intermediate metabolism; (S)-3-hydroxy-3-methylglutaryl-CoA degradation; acetoacetate from (S)-3-hydroxy-3-methylglutaryl-CoA: step 1/1. Its function is as follows. Non-mitochondrial 3-hydroxy-3-methylglutaryl-CoA lyase that catalyzes a cation-dependent cleavage of (S)-3-hydroxy-3-methylglutaryl-CoA into acetyl-CoA and acetoacetate, a key step in ketogenesis, the products of which support energy production in nonhepatic animal tissues. The protein is 3-hydroxy-3-methylglutaryl-CoA lyase, cytoplasmic (hmgcll1) of Danio rerio (Zebrafish).